The sequence spans 591 residues: V-type ATP synthase alpha chain (591 aa).

232–239 is a binding site for ATP; that stretch reads GPFGAGKT.

It belongs to the ATPase alpha/beta chains family.

It carries out the reaction ATP + H2O + 4 H(+)(in) = ADP + phosphate + 5 H(+)(out). Functionally, produces ATP from ADP in the presence of a proton gradient across the membrane. The V-type alpha chain is a catalytic subunit. The polypeptide is V-type ATP synthase alpha chain (Clostridium perfringens (strain ATCC 13124 / DSM 756 / JCM 1290 / NCIMB 6125 / NCTC 8237 / Type A)).